The chain runs to 994 residues: Glycine dehydrogenase (decarboxylating) (994 aa).

The segment at 1 to 20 (MTDHAENRCGLEGPRPFSSR) is disordered. Position 716 is an N6-(pyridoxal phosphate)lysine (lysine 716).

This sequence belongs to the GcvP family. In terms of assembly, the glycine cleavage system is composed of four proteins: P, T, L and H. It depends on pyridoxal 5'-phosphate as a cofactor.

The catalysed reaction is N(6)-[(R)-lipoyl]-L-lysyl-[glycine-cleavage complex H protein] + glycine + H(+) = N(6)-[(R)-S(8)-aminomethyldihydrolipoyl]-L-lysyl-[glycine-cleavage complex H protein] + CO2. Its function is as follows. The glycine cleavage system catalyzes the degradation of glycine. The P protein binds the alpha-amino group of glycine through its pyridoxal phosphate cofactor; CO(2) is released and the remaining methylamine moiety is then transferred to the lipoamide cofactor of the H protein. In Cutibacterium acnes (strain DSM 16379 / KPA171202) (Propionibacterium acnes), this protein is Glycine dehydrogenase (decarboxylating).